The sequence spans 530 residues: Na(+)/H(+) antiporter NhaB (530 aa).

Helical transmembrane passes span 13–33 (FLGKAPDWYKIAILSFLVINP), 34–54 (LVFFFVDPFTAGWLLVVEFIF), 90–110 (LVANIEVLLLLVFMVAGIYFM), 121–141 (ILIGIKSKTALSVAFCFTAAF), 145–165 (FLDALTVIAVVISVAVGFYAI), 205–225 (LLIHAGVGTALGGVMTMVGEP), 241–261 (FIIRMLPITAPVFICGILTCI), 306–326 (GLIAVWLIVGLALHLAAVGLI), 327–347 (GLSVIILATAFTGVIEEHSMG), 351–371 (EEALPFTALLAVFFAVVAVII), 455–475 (GQAAFLFLLTSALAPLIQLSY), and 481–501 (MALPYTIVLALVGMFGIIFFL).

This sequence belongs to the NhaB Na(+)/H(+) (TC 2.A.34) antiporter family.

It is found in the cell inner membrane. The enzyme catalyses 2 Na(+)(in) + 3 H(+)(out) = 2 Na(+)(out) + 3 H(+)(in). In terms of biological role, na(+)/H(+) antiporter that extrudes sodium in exchange for external protons. This chain is Na(+)/H(+) antiporter NhaB, found in Aliivibrio fischeri (strain MJ11) (Vibrio fischeri).